A 229-amino-acid polypeptide reads, in one-letter code: Echinolectin 1 (229 aa).

An N-linked (GlcNAc...) asparagine glycan is attached at Asn-94.

It localises to the secreted. This Echinometra lucunter (Rock-boring urchin) protein is Echinolectin 1.